A 545-amino-acid chain; its full sequence is MSISAQNPDISGDRQSGQDVRTQNVMACQAVSNIVKTSLGPVGLDKMLVDDIGDVTITNDGATILRMLEVEHPAAKVLVELAELQDREVGDGTTSVVIVAAELLKRANDLVRNKIHPTSIISGYRLAMRESCKYIEEKLVTKVEKLGKVPLINCAKTSMSSKLISGDSDFFANLVVEAVLSVKMTNQRGEIKYPIKGINILKAHGQSARDSYLLNGYALNTGRAAQGMPLRVSPAKIACLDFNLQKTKMQLGVQVVVNDPRELEKIRQREADMTKERIEKLLKAGANVILTTKGIDDMALKYFVEAGAIAVRRVRKEDMRHVAKATGATLVTTFADMEGEETFDPAHLGSADEVVEERIADDDVILIKGTKTSSAVSLILRGANDYMLDEMERALHDALCIVKRTLESNTVVAGGGAVESALSVYLEHLATTLGSREQLAIAEFADALLIIPKVLAVNAAKDATELVAKLRAYHHTAQTKADKKHYSSMGLDLVNGTIRNNLEAGVIEPAMSKVKIIQFATEAAITILRIDDMIKLVKDESQGEE.

An N-acetylserine modification is found at Ser2.

It belongs to the TCP-1 chaperonin family. In terms of assembly, heterooligomeric complex of about 850 to 900 kDa that forms two stacked rings, 12 to 16 nm in diameter.

The protein localises to the cytoplasm. Functionally, molecular chaperone; assists the folding of proteins upon ATP hydrolysis. Known to play a role, in vitro, in the folding of actin and tubulin. This is T-complex protein 1 subunit alpha from Arabidopsis thaliana (Mouse-ear cress).